Reading from the N-terminus, the 78-residue chain is Small ribosomal subunit protein uS17 (78 aa).

It belongs to the universal ribosomal protein uS17 family. Part of the 30S ribosomal subunit.

Its function is as follows. One of the primary rRNA binding proteins, it binds specifically to the 5'-end of 16S ribosomal RNA. In Rhizobium meliloti (strain 1021) (Ensifer meliloti), this protein is Small ribosomal subunit protein uS17.